A 500-amino-acid chain; its full sequence is Pyruvate kinase 1 (500 aa).

Ser-2 carries the N-acetylserine modification. Ser-9 and Ser-16 each carry phosphoserine. Thr-31 is modified (phosphothreonine). Arg-49 is a substrate binding site. K(+) is bound by residues Asn-51 and Ser-53. 51–54 (NFSH) contributes to the ATP binding site. At Ser-70 the chain carries Phosphoserine. Positions 84 and 85 each coordinate K(+). An ATP-binding site is contributed by Arg-91. Glycyl lysine isopeptide (Lys-Gly) (interchain with G-Cter in URM1) cross-links involve residues Lys-119, Lys-124, Lys-161, Lys-164, and Lys-166. An ATP-binding site is contributed by Lys-177. Residue Thr-184 is modified to Phosphothreonine. A Glycyl lysine isopeptide (Lys-Gly) (interchain with G-Cter in ubiquitin) cross-link involves residue Lys-204. Position 213 is a phosphoserine (Ser-213). Position 240 (Lys-240) interacts with substrate. Residue Glu-242 coordinates Mn(2+). A Glycyl lysine isopeptide (Lys-Gly) (interchain with G-Cter in ubiquitin) cross-link involves residue Lys-255. 2 residues coordinate substrate: Gly-265 and Asp-266. Asp-266 contributes to the Mn(2+) binding site. Lys-292 is covalently cross-linked (Glycyl lysine isopeptide (Lys-Gly) (interchain with G-Cter in URM1)). Residue Thr-298 participates in substrate binding. Ser-316 is subject to Phosphoserine. Lys-394 participates in a covalent cross-link: Glycyl lysine isopeptide (Lys-Gly) (interchain with G-Cter in URM1). A beta-D-fructose 1,6-bisphosphate-binding site is contributed by 402–407 (STSGTT). Cys-418 carries the cysteine persulfide modification. Lys-446 participates in a covalent cross-link: Glycyl lysine isopeptide (Lys-Gly) (interchain with G-Cter in ubiquitin); alternate. Residue Lys-446 forms a Glycyl lysine isopeptide (Lys-Gly) (interchain with G-Cter in URM1); alternate linkage. Phosphoserine is present on Ser-450. 2 residues coordinate beta-D-fructose 1,6-bisphosphate: Trp-452 and Arg-459. Residue Thr-478 is modified to Phosphothreonine. Residue Gly-484 participates in beta-D-fructose 1,6-bisphosphate binding.

It belongs to the pyruvate kinase family. As to quaternary structure, homotetramer. It depends on Mg(2+) as a cofactor. The cofactor is K(+). Conjugated to URM1, a ubiquitin-like protein, in response to oxidative stresses. The attachment of URM1 to lysine residues exclusively depends on the presence of a peroxidatic cysteine in the target protein, with low specificity for the particular residue, motif, or structural context at which urmylation can occur. The URM1-conjugation reaction is mechanistically and directly coupled to the process of cysteine persulfidation, transfering the sulfur atom of the URM1 thiocarboxyl group to redox-active cysteine residues in the target protein if it is exposed to oxidative conditions. Post-translationally, persulfidated on specific redox-active cysteine residues. Persulfidation (also called protein S-sulfhydration) may provide a molecular mechanism that enables cells to protect vulnerable cysteine residues from reactive oxygen species (ROS) under stress conditions.

It carries out the reaction pyruvate + ATP = phosphoenolpyruvate + ADP + H(+). It participates in carbohydrate degradation; glycolysis; pyruvate from D-glyceraldehyde 3-phosphate: step 5/5. Its activity is regulated as follows. The activity is regulated by glucose levels. Activated by fructose-1,6-bisphosphate. This Saccharomyces cerevisiae (strain ATCC 204508 / S288c) (Baker's yeast) protein is Pyruvate kinase 1 (CDC19).